The chain runs to 220 residues: Uracil-DNA glycosylase 1 (220 aa).

D65 (proton acceptor) is an active-site residue.

The protein belongs to the uracil-DNA glycosylase (UDG) superfamily. UNG family.

The protein resides in the cytoplasm. The catalysed reaction is Hydrolyzes single-stranded DNA or mismatched double-stranded DNA and polynucleotides, releasing free uracil.. Excises uracil residues from the DNA which can arise as a result of misincorporation of dUMP residues by DNA polymerase or due to deamination of cytosine. This chain is Uracil-DNA glycosylase 1, found in Bacteroides fragilis (strain ATCC 25285 / DSM 2151 / CCUG 4856 / JCM 11019 / LMG 10263 / NCTC 9343 / Onslow / VPI 2553 / EN-2).